Here is a 461-residue protein sequence, read N- to C-terminus: UPF0210 protein LCABL_10110 (461 aa).

This sequence belongs to the UPF0210 family. Homodimer.

This Lacticaseibacillus casei (strain BL23) (Lactobacillus casei) protein is UPF0210 protein LCABL_10110.